The sequence spans 483 residues: MSGGGPSGGGPGGSGRARTSSFAEPGGGGGGGGGGPGGSASGPGGTGGGKASVGAMGGGVGASSSGGGPSGSGGGGSGGPGAGTSFPPPGVKLGRDSGKVTTVVATLGQGPERSQEVAYTDIKVIGNGSFGVVYQARLAETRELVAIKKVLQDKRFKNRELQIMRKLDHCNIVRLRYFFYSSGEKKDELYLNLVLEYVPETVYRVARHFTKAKLIIPIIYVKVYMYQLFRSLAYIHSQGVCHRDIKPQNLLVDPDTAVLKLCDFGSAKQLVRGEPNVSYICSRYYRAPELIFGATDYTSSIDVWSAGCVLAELLLGQPIFPGDSGVDQLVEIIKVLGTPTREQIREMNPNYTEFKFPQIKAHPWTKVFKSRTPPEAIALCSSLLEYTPSSRLSPLEACAHSFFDELRSLGTQLPNNRPLPPLFNFSPGELSIQPSLNAILIPPHLRSPSGPATLTSSSQALTETQTGQDWQAPDATPTLTNSS.

Gly residues predominate over residues 1–15; that stretch reads MSGGGPSGGGPGGSG. Positions 1 to 96 are disordered; sequence MSGGGPSGGG…PPPGVKLGRD (96 aa). Ser-2 bears the N-acetylserine mark. A Phosphoserine modification is found at Ser-2. Ser-21 is subject to Phosphoserine; by PKB/AKT1. Positions 25 to 82 are enriched in gly residues; it reads PGGGGGGGGGGPGGSASGPGGTGGGKASVGAMGGGVGASSSGGGPSGSGGGGSGGPGA. A phosphoserine mark is found at Ser-72, Ser-77, and Ser-97. The 285-residue stretch at 119–403 folds into the Protein kinase domain; that stretch reads YTDIKVIGNG…PLEACAHSFF (285 aa). ATP is bound by residues 125 to 133 and Lys-148; that span reads IGNGSFGVV. Asp-244 (proton acceptor) is an active-site residue. Tyr-279 carries the post-translational modification Phosphotyrosine. The interval 443 to 483 is disordered; the sequence is PHLRSPSGPATLTSSSQALTETQTGQDWQAPDATPTLTNSS. Positions 450 to 469 are enriched in polar residues; the sequence is GPATLTSSSQALTETQTGQD.

The protein belongs to the protein kinase superfamily. CMGC Ser/Thr protein kinase family. GSK-3 subfamily. Monomer. Interacts with ARRB2, AXIN1 and CTNNB1/beta-catenin. Interacts with CTNND2. Interacts with LMBR1L. Interacts with DDX3X. Interacts with TNFRSF10B. In terms of processing, phosphorylated by AKT1 at Ser-21: upon insulin-mediated signaling, the activated PKB/AKT1 protein kinase phosphorylates and deactivates GSK3A, resulting in the dephosphorylation and activation of GYS1. Activated by phosphorylation at Tyr-279.

The catalysed reaction is L-seryl-[tau protein] + ATP = O-phospho-L-seryl-[tau protein] + ADP + H(+). It catalyses the reaction L-threonyl-[tau protein] + ATP = O-phospho-L-threonyl-[tau protein] + ADP + H(+). It carries out the reaction L-seryl-[protein] + ATP = O-phospho-L-seryl-[protein] + ADP + H(+). The enzyme catalyses L-threonyl-[protein] + ATP = O-phospho-L-threonyl-[protein] + ADP + H(+). With respect to regulation, activated by phosphorylation at Tyr-279. In response to insulin, inhibited by phosphorylation at Ser-21 by PKB/AKT1; phosphorylation at this site causes a conformational change, preventing access of substrates to the active site. Inhibited by lithium. Functionally, constitutively active protein kinase that acts as a negative regulator in the hormonal control of glucose homeostasis, Wnt signaling and regulation of transcription factors and microtubules, by phosphorylating and inactivating glycogen synthase (GYS1 or GYS2), CTNNB1/beta-catenin, APC and AXIN1. Requires primed phosphorylation of the majority of its substrates. Contributes to insulin regulation of glycogen synthesis by phosphorylating and inhibiting GYS1 activity and hence glycogen synthesis. Regulates glycogen metabolism in liver, but not in muscle. May also mediate the development of insulin resistance by regulating activation of transcription factors. In Wnt signaling, regulates the level and transcriptional activity of nuclear CTNNB1/beta-catenin. Facilitates amyloid precursor protein (APP) processing and the generation of APP-derived amyloid plaques found in Alzheimer disease. May be involved in the regulation of replication in pancreatic beta-cells. Is necessary for the establishment of neuronal polarity and axon outgrowth. Through phosphorylation of the anti-apoptotic protein MCL1, may control cell apoptosis in response to growth factors deprivation. Acts as a regulator of autophagy by mediating phosphorylation of KAT5/TIP60 under starvation conditions, activating KAT5/TIP60 acetyltransferase activity and promoting acetylation of key autophagy regulators, such as ULK1 and RUBCNL/Pacer. Negatively regulates extrinsic apoptotic signaling pathway via death domain receptors. Promotes the formation of an anti-apoptotic complex, made of DDX3X, BRIC2 and GSK3B, at death receptors, including TNFRSF10B. The anti-apoptotic function is most effective with weak apoptotic signals and can be overcome by stronger stimulation. In Rattus norvegicus (Rat), this protein is Glycogen synthase kinase-3 alpha (Gsk3a).